We begin with the raw amino-acid sequence, 435 residues long: Nucleoredoxin (435 aa).

At serine 2 the chain carries N-acetylserine. A Thioredoxin domain is found at 167–321 (PKPFREVIAG…VLELSDSNAA (155 aa)).

The protein belongs to the nucleoredoxin family. Associates with the phosphatase 2A holoenzyme. Interacts with PPP2CA; the interaction is direct. Interacts with DVL1 (via PDZ domain); the interaction is direct and regulated by oxidative stress.

It is found in the cytoplasm. The protein localises to the cytosol. Its subcellular location is the nucleus. It carries out the reaction [protein]-dithiol + NAD(+) = [protein]-disulfide + NADH + H(+). The enzyme catalyses [protein]-dithiol + NADP(+) = [protein]-disulfide + NADPH + H(+). In terms of biological role, functions as a redox-dependent negative regulator of the Wnt signaling pathway, possibly by preventing ubiquitination of DVL3 by the BCR(KLHL12) complex. May also function as a transcriptional regulator act as a regulator of protein phosphatase 2A (PP2A). The sequence is that of Nucleoredoxin (NXN) from Homo sapiens (Human).